Reading from the N-terminus, the 382-residue chain is Polyadenylate-binding protein 5 (382 aa).

4 consecutive RRM domains span residues 18-96 (AALY…WSQP), 106-182 (GNIF…RFKF), 199-276 (TNVF…RAQK), and 302-378 (VPIY…LGQA).

It is found in the cytoplasm. Functionally, binds the poly(A) tail of mRNA. May be involved in cytoplasmic regulatory processes of mRNA metabolism. Can probably bind to cytoplasmic RNA sequences other than poly(A) in vivo. The chain is Polyadenylate-binding protein 5 (PABPC5) from Macaca mulatta (Rhesus macaque).